The following is a 143-amino-acid chain: DKGPGFVVTGRVYCDPCRAGFETNVSHNVQGATVAVDCRPFNGGESKLKAEATTDGLGWYKIEIDQDHQEEICEVVLAKSPDTTCSEIEEFRDRARVPLTSNNGIKQQGIRYANPIAFFRKEPLKECGGILQAYDLRDAPETP.

Disulfide bonds link Cys-14/Cys-85, Cys-17/Cys-127, and Cys-38/Cys-73. Asn-24 is a glycosylation site (N-linked (GlcNAc...) asparagine).

Belongs to the Ole e I family.

The protein resides in the secreted. The chain is Pollen allergen Phl p 11 from Phleum pratense (Common timothy).